The chain runs to 383 residues: BRISC and BRCA1-A complex member 2 (383 aa).

At Met-1 the chain carries N-acetylmethionine. Position 2 is a phosphoserine (Ser-2). UEV-like stretches follow at residues 30-147 (DATN…TLLE) and 275-364 (IAAF…RAKA).

Belongs to the BABAM2 family. Component of the ARISC complex, at least composed of UIMC1/RAP80, ABRAXAS1, BRCC3/BRCC36, BABAM2 and BABAM1/NBA1. Component of the BRCA1-A complex, at least composed of BRCA1, BARD1, UIMC1/RAP80, ABRAXAS1, BRCC3/BRCC36, BABAM2 and BABAM1/NBA1. In the BRCA1-A complex, interacts directly with ABRAXAS1, BRCC3/BRCC36 and BABAM1/NBA1. Binds polyubiquitin. Component of the BRISC complex, at least composed of ABRAXAS2, BRCC3/BRCC36, BABAM2 and BABAM1/NBA1. Identified in a complex with SHMT2 and the other subunits of the BRISC complex. Component of the BRCA1/BRCA2 containing complex (BRCC), which also contains BRCA1, BRCA2, BARD1, BRCC3/BRCC36 and RAD51. BRCC is a ubiquitin E3 ligase complex that enhances cellular survival following DNA damage. May interact with FAS and TNFRSF1A. In terms of tissue distribution, expressed in brain, heart, kidney, liver, lung, testis, germinal center B-cells and various mouse cell lines.

Its subcellular location is the cytoplasm. It localises to the nucleus. Functionally, component of the BRCA1-A complex, a complex that specifically recognizes 'Lys-63'-linked ubiquitinated histones H2A and H2AX at DNA lesions sites, leading to target the BRCA1-BARD1 heterodimer to sites of DNA damage at double-strand breaks (DSBs). The BRCA1-A complex also possesses deubiquitinase activity that specifically removes 'Lys-63'-linked ubiquitin on histones H2A and H2AX. In the BRCA1-A complex, it acts as an adapter that bridges the interaction between BABAM1/NBA1 and the rest of the complex, thereby being required for the complex integrity and modulating the E3 ubiquitin ligase activity of the BRCA1-BARD1 heterodimer. Probably also plays a role as a component of the BRISC complex, a multiprotein complex that specifically cleaves 'Lys-63'-linked ubiquitin. May regulate TNF-alpha signaling through its interactions with TNFRSF1A. Component of the BRCA1-A complex, a complex that specifically recognizes 'Lys-63'-linked ubiquitinated histones H2A and H2AX at DNA lesions sites, leading to target the BRCA1-BARD1 heterodimer to sites of DNA damage at double-strand breaks (DSBs). The BRCA1-A complex also possesses deubiquitinase activity that specifically removes 'Lys-63'-linked ubiquitin on histones H2A and H2AX. In the BRCA1-A complex, it acts as an adapter that bridges the interaction between BABAM1/NBA1 and the rest of the complex, thereby being required for the complex integrity and modulating the E3 ubiquitin ligase activity of the BRCA1-BARD1 heterodimer. Component of the BRISC complex, a multiprotein complex that specifically cleaves 'Lys-63'-linked ubiquitin in various substrates. Within the BRISC complex, acts as an adapter that bridges the interaction between BABAM1/NBA1 and the rest of the complex, thereby being required for the complex integrity. The BRISC complex is required for normal mitotic spindle assembly and microtubule attachment to kinetochores via its role in deubiquitinating NUMA1. The BRISC complex plays a role in interferon signaling via its role in the deubiquitination of the interferon receptor IFNAR1; deubiquitination increases IFNAR1 activity by enhancing its stability and cell surface expression. Down-regulates the response to bacterial lipopolysaccharide (LPS) via its role in IFNAR1 deubiquitination. May play a role in homeostasis or cellular differentiation in cells of neural, epithelial and germline origins. May also act as a death receptor-associated anti-apoptotic protein, which inhibits the mitochondrial apoptotic pathway. May regulate TNF-alpha signaling through its interactions with TNFRSF1A; however these effects may be indirect. The polypeptide is BRISC and BRCA1-A complex member 2 (Babam2) (Mus musculus (Mouse)).